A 148-amino-acid polypeptide reads, in one-letter code: Arginine repressor (148 aa).

Belongs to the ArgR family.

It is found in the cytoplasm. Its pathway is amino-acid biosynthesis; L-arginine biosynthesis [regulation]. Regulates arginine biosynthesis genes. This chain is Arginine repressor, found in Chlorobium limicola (strain DSM 245 / NBRC 103803 / 6330).